The following is a 620-amino-acid chain: Glutathione-regulated potassium-efflux system protein KefC (620 aa).

Transmembrane regions (helical) follow at residues 4 to 24 (HTLI…PIAV), 26 to 46 (LGLG…PWGL), 54 to 74 (SILH…GLEL), 90 to 110 (GALQ…LLGL), 114 to 134 (VAEL…MQAM), 149 to 169 (FAVL…IPLL), 178 to 198 (MGAF…VVLL), 218 to 238 (VFSA…EEVG), 270 to 290 (GLLL…GTLL), 294 to 314 (LRIV…LWLI), 327 to 347 (WFAV…GAAQ), and 359 to 379 (SLTL…VILN). The RCK N-terminal domain maps to 399–518 (QPRVIIAGFG…AGVEKPERET (120 aa)). Positions 597–620 (GWQGTEEGKHTGNMADEPETKPSS) are disordered.

The protein belongs to the monovalent cation:proton antiporter 2 (CPA2) transporter (TC 2.A.37) family. KefC subfamily. In terms of assembly, homodimer. Interacts with the regulatory subunit KefF.

Its subcellular location is the cell inner membrane. Functionally, pore-forming subunit of a potassium efflux system that confers protection against electrophiles. Catalyzes K(+)/H(+) antiport. The chain is Glutathione-regulated potassium-efflux system protein KefC from Escherichia coli O6:K15:H31 (strain 536 / UPEC).